We begin with the raw amino-acid sequence, 378 residues long: Protein RecA (378 aa).

Position 79 to 86 (79 to 86 (GPESSGKT)) interacts with ATP.

The protein belongs to the RecA family.

Its subcellular location is the cytoplasm. In terms of biological role, can catalyze the hydrolysis of ATP in the presence of single-stranded DNA, the ATP-dependent uptake of single-stranded DNA by duplex DNA, and the ATP-dependent hybridization of homologous single-stranded DNAs. It interacts with LexA causing its activation and leading to its autocatalytic cleavage. This Streptococcus pyogenes serotype M28 (strain MGAS6180) protein is Protein RecA.